Here is a 189-residue protein sequence, read N- to C-terminus: Nucleolar protein 16 (189 aa).

The segment covering 1-33 (MARDVKKRGKPAYTNRRNRQKYLKKKDNKKKLS) has biased composition (basic residues). The disordered stretch occupies residues 1–34 (MARDVKKRGKPAYTNRRNRQKYLKKKDNKKKLSK).

Belongs to the NOP16 family.

The protein resides in the nucleus. Its subcellular location is the nucleolus. This chain is Nucleolar protein 16, found in Caenorhabditis elegans.